Consider the following 176-residue polypeptide: MLRLTAGRVRSLLAGRATAAFSTSSARMASHDLEVAESVDMSKPLYWDRLDTPLPDRPYKEDLTAADKSLKQKEKGPWGQLSKEEKIALYRLMFCQTYSEMKQPSSEWKTVFGGIFIFLGFTGLVVWWQALYVYPPRPRTFDDEWKAKQLKRMLDMRVNPIEGFSAKWDYEKGQWK.

Residues 1–28 (MLRLTAGRVRSLLAGRATAAFSTSSARM) constitute a mitochondrion transit peptide. Over 29-106 (ASHDLEVAES…TYSEMKQPSS (78 aa)) the chain is Mitochondrial matrix. A helical transmembrane segment spans residues 107–132 (EWKTVFGGIFIFLGFTGLVVWWQALY). Residues 133–176 (VYPPRPRTFDDEWKAKQLKRMLDMRVNPIEGFSAKWDYEKGQWK) lie on the Mitochondrial intermembrane side of the membrane.

The protein belongs to the cytochrome c oxidase IV family. In terms of assembly, component of the cytochrome c oxidase (complex IV, CIV), a multisubunit enzyme composed of 14 subunits. The complex is composed of a catalytic core of 3 subunits MT-CO1, MT-CO2 and MT-CO3, encoded in the mitochondrial DNA, and 11 supernumerary subunits COX4I, COX5A, COX5B, COX6A, COX6B, COX6C, COX7A, COX7B, COX7C, COX8 and NDUFA4, which are encoded in the nuclear genome. The complex exists as a monomer or a dimer and forms supercomplexes (SCs) in the inner mitochondrial membrane with NADH-ubiquinone oxidoreductase (complex I, CI) and ubiquinol-cytochrome c oxidoreductase (cytochrome b-c1 complex, complex III, CIII), resulting in different assemblies (supercomplex SCI(1)III(2)IV(1) and megacomplex MCI(2)III(2)IV(2)).

It is found in the mitochondrion inner membrane. Its pathway is energy metabolism; oxidative phosphorylation. Functionally, component of the cytochrome c oxidase, the last enzyme in the mitochondrial electron transport chain which drives oxidative phosphorylation. The respiratory chain contains 3 multisubunit complexes succinate dehydrogenase (complex II, CII), ubiquinol-cytochrome c oxidoreductase (cytochrome b-c1 complex, complex III, CIII) and cytochrome c oxidase (complex IV, CIV), that cooperate to transfer electrons derived from NADH and succinate to molecular oxygen, creating an electrochemical gradient over the inner membrane that drives transmembrane transport and the ATP synthase. Cytochrome c oxidase is the component of the respiratory chain that catalyzes the reduction of oxygen to water. Electrons originating from reduced cytochrome c in the intermembrane space (IMS) are transferred via the dinuclear copper A center (CU(A)) of subunit 2 and heme A of subunit 1 to the active site in subunit 1, a binuclear center (BNC) formed by heme A3 and copper B (CU(B)). The BNC reduces molecular oxygen to 2 water molecules using 4 electrons from cytochrome c in the IMS and 4 protons from the mitochondrial matrix. The chain is Cytochrome c oxidase subunit 4 isoform 2, mitochondrial from Thunnus obesus (Bigeye tuna).